A 146-amino-acid polypeptide reads, in one-letter code: Hemoglobin subunit beta (146 aa).

A Globin domain is found at 2 to 146; that stretch reads HWSAEEKQLI…VAHALARKYH (145 aa). Residues His-63 and His-92 each coordinate heme b.

This sequence belongs to the globin family. As to quaternary structure, heterotetramer of two alpha chains and two beta chains. Red blood cells.

Involved in oxygen transport from the lung to the various peripheral tissues. This is Hemoglobin subunit beta (HBB) from Columba livia (Rock dove).